A 578-amino-acid chain; its full sequence is Cyclin-SDS (578 aa).

The tract at residues 1–31 is disordered; it reads MKEIAMRNSKRKPEPTPFAGKKLRSTRLRRK. A compositionally biased stretch (basic residues) spans 21–31; sequence KKLRSTRLRRK.

The protein belongs to the cyclin family. As to quaternary structure, may interact with CDKA-1 and CDKB1-1.

Functionally, meiosis-specific cyclin. Required for normal homolog synapsis and recombination in early to mid-prophase 1. May regulate the timing of sister chromatid separation. The chain is Cyclin-SDS (SDS) from Arabidopsis thaliana (Mouse-ear cress).